The primary structure comprises 192 residues: Nucleoside triphosphate pyrophosphatase (192 aa).

Catalysis depends on Asp73, which acts as the Proton acceptor.

The protein belongs to the Maf family. Requires a divalent metal cation as cofactor.

It localises to the cytoplasm. It catalyses the reaction a ribonucleoside 5'-triphosphate + H2O = a ribonucleoside 5'-phosphate + diphosphate + H(+). The catalysed reaction is a 2'-deoxyribonucleoside 5'-triphosphate + H2O = a 2'-deoxyribonucleoside 5'-phosphate + diphosphate + H(+). In terms of biological role, nucleoside triphosphate pyrophosphatase. May have a dual role in cell division arrest and in preventing the incorporation of modified nucleotides into cellular nucleic acids. The protein is Nucleoside triphosphate pyrophosphatase of Ehrlichia chaffeensis (strain ATCC CRL-10679 / Arkansas).